We begin with the raw amino-acid sequence, 481 residues long: MGALARALPSILLALLLTSTPEALGANPGLVARITDKGLQYAAQEGLLALQSELLRITLPDFTGDLRIPHVGRGRYEFHSLNIHSCELLHSALRPVPGQGLSLSISDSSIRVQGRWKVRKSFFKLQGSFDVSVKGISISVNLLLGSESSGRPTVTASSCSSDIADVEVDMSGDLGWLLNLFHNQIESKFQKVLESRICEMIQKSVSSDLQPYLQTLPVTTEIDSFADIDYSLVEAPRATAQMLEVMFKGEIFHRNHRSPVTLLAAVMSLPEEHNKMVYFAISDYVFNTASLVYHEEGYLNFSITDDMIPPDSNIRLTTKSFRPFVPRLARLYPNMNLELQGSVPSAPLLNFSPGNLSVDPYMEIDAFVLLPSSSKEPVFRLSVATNVSATLTFNTSKITGFLKPGKVKVELKESKVGLFNAELLEALLNYYILNTFYPKFNDKLAEGFPLPLLKRVQLYDLGLQIHKDFLFLGANVQYMRV.

The signal sequence occupies residues 1–25 (MGALARALPSILLALLLTSTPEALG). Cys159 and Cys198 are disulfide-bonded. N-linked (GlcNAc...) asparagine glycans are attached at residues Asn300, Asn355, Asn386, and Asn394.

This sequence belongs to the BPI/LBP/Plunc superfamily. BPI/LBP family. In terms of assembly, when bound to LPS, interacts (via C-terminus) with soluble and membrane-bound CD14. Detected in blood serum (at protein level).

It localises to the secreted. The protein localises to the cytoplasmic granule membrane. Its function is as follows. Plays a role in the innate immune response. Binds to the lipid A moiety of bacterial lipopolysaccharides (LPS), a glycolipid present in the outer membrane of all Gram-negative bacteria. Acts as an affinity enhancer for CD14, facilitating its association with LPS. Promotes the release of cytokines in response to bacterial lipopolysaccharide. In Homo sapiens (Human), this protein is Lipopolysaccharide-binding protein (LBP).